A 191-amino-acid polypeptide reads, in one-letter code: Leucyl/phenylalanyl-tRNA--protein transferase (191 aa).

The protein belongs to the L/F-transferase family.

The protein localises to the cytoplasm. It carries out the reaction N-terminal L-lysyl-[protein] + L-leucyl-tRNA(Leu) = N-terminal L-leucyl-L-lysyl-[protein] + tRNA(Leu) + H(+). The enzyme catalyses N-terminal L-arginyl-[protein] + L-leucyl-tRNA(Leu) = N-terminal L-leucyl-L-arginyl-[protein] + tRNA(Leu) + H(+). It catalyses the reaction L-phenylalanyl-tRNA(Phe) + an N-terminal L-alpha-aminoacyl-[protein] = an N-terminal L-phenylalanyl-L-alpha-aminoacyl-[protein] + tRNA(Phe). In terms of biological role, functions in the N-end rule pathway of protein degradation where it conjugates Leu, Phe and, less efficiently, Met from aminoacyl-tRNAs to the N-termini of proteins containing an N-terminal arginine or lysine. In Herpetosiphon aurantiacus (strain ATCC 23779 / DSM 785 / 114-95), this protein is Leucyl/phenylalanyl-tRNA--protein transferase.